The chain runs to 242 residues: Eukaryotic translation initiation factor 3 subunit J (242 aa).

The segment covering 1–10 (MASWDDEDFE) has biased composition (acidic residues). Disordered regions lie at residues 1–58 (MASW…KAQR), 71–97 (MKLKPEDASTKRDRQRQAELDSDMMNA), and 201–242 (REEK…DDFM). The span at 11–21 (VPAAATPAVPA) shows a compositional bias: low complexity. The span at 23 to 38 (WDDDEEEDVMDSWDAE) shows a compositional bias: acidic residues. Positions 71–89 (MKLKPEDASTKRDRQRQAE) are enriched in basic and acidic residues.

The protein belongs to the eIF-3 subunit J family. Component of the eukaryotic translation initiation factor 3 (eIF-3) complex.

The protein resides in the cytoplasm. Its function is as follows. Component of the eukaryotic translation initiation factor 3 (eIF-3) complex, which is involved in protein synthesis of a specialized repertoire of mRNAs and, together with other initiation factors, stimulates binding of mRNA and methionyl-tRNAi to the 40S ribosome. The eIF-3 complex specifically targets and initiates translation of a subset of mRNAs involved in cell proliferation. The sequence is that of Eukaryotic translation initiation factor 3 subunit J from Yarrowia lipolytica (strain CLIB 122 / E 150) (Yeast).